The chain runs to 246 residues: Mast cell protease 1 (246 aa).

A signal peptide spans 1 to 18; that stretch reads MQALLFLMALLLPSGAGA. Residues 19 to 20 constitute a propeptide, activation peptide; it reads EE. The 224-residue stretch at 21-244 folds into the Peptidase S1 domain; that stretch reads IIGGVEARPH…YVPWIKTVIN (224 aa). Cys50 and Cys66 form a disulfide bridge. Catalysis depends on His65, which acts as the Charge relay system. N-linked (GlcNAc...) asparagine glycosylation occurs at Asn102. The active-site Charge relay system is Asp109. Intrachain disulfides connect Cys143/Cys208 and Cys174/Cys187. The active-site Charge relay system is Ser202.

The protein belongs to the peptidase S1 family. Granzyme subfamily. As to expression, mucosal mast cells.

It is found in the secreted. The protein localises to the cytoplasmic granule. Has a chymotrypsin-like activity. The protein is Mast cell protease 1 (Mcpt1) of Mus musculus (Mouse).